A 441-amino-acid chain; its full sequence is Ribosomal protein uS12 methylthiotransferase RimO (441 aa).

An MTTase N-terminal domain is found at 8 to 118 (PKIGFVSLGC…VLEHVHHYVP (111 aa)). The [4Fe-4S] cluster site is built by Cys17, Cys53, Cys82, Cys150, Cys154, and Cys157. The region spanning 136–373 (LTPRHYAYLK…MQLQQQISAE (238 aa)) is the Radical SAM core domain. The TRAM domain occupies 376–441 (QEKVGREILV…DEYDLWGSRV (66 aa)).

This sequence belongs to the methylthiotransferase family. RimO subfamily. The cofactor is [4Fe-4S] cluster.

The protein resides in the cytoplasm. It catalyses the reaction L-aspartate(89)-[ribosomal protein uS12]-hydrogen + (sulfur carrier)-SH + AH2 + 2 S-adenosyl-L-methionine = 3-methylsulfanyl-L-aspartate(89)-[ribosomal protein uS12]-hydrogen + (sulfur carrier)-H + 5'-deoxyadenosine + L-methionine + A + S-adenosyl-L-homocysteine + 2 H(+). Its function is as follows. Catalyzes the methylthiolation of an aspartic acid residue of ribosomal protein uS12. This is Ribosomal protein uS12 methylthiotransferase RimO from Shigella boydii serotype 18 (strain CDC 3083-94 / BS512).